A 485-amino-acid chain; its full sequence is NADH-quinone oxidoreductase subunit N (485 aa).

A run of 14 helical transmembrane segments spans residues 8–28, 35–55, 71–91, 105–125, 127–147, 159–179, 203–223, 235–255, 271–291, 297–317, 326–346, 373–393, 408–430, and 455–475; these read LIAL…MLSI, FLNA…LWFV, GFAM…CTFA, FYLL…ANHL, SLFL…GYAF, YTIL…LVYA, LLAG…LVPF, PAPV…GVVM, VVLA…ALSQ, LLGY…IALQ, VGVY…VVSL, AAVM…LGFI, WWLV…RVAV, and IVVL…QPLI.

The protein belongs to the complex I subunit 2 family. In terms of assembly, NDH-1 is composed of 13 different subunits. Subunits NuoA, H, J, K, L, M, N constitute the membrane sector of the complex.

The protein localises to the cell inner membrane. The catalysed reaction is a quinone + NADH + 5 H(+)(in) = a quinol + NAD(+) + 4 H(+)(out). Its function is as follows. NDH-1 shuttles electrons from NADH, via FMN and iron-sulfur (Fe-S) centers, to quinones in the respiratory chain. The immediate electron acceptor for the enzyme in this species is believed to be ubiquinone. Couples the redox reaction to proton translocation (for every two electrons transferred, four hydrogen ions are translocated across the cytoplasmic membrane), and thus conserves the redox energy in a proton gradient. This is NADH-quinone oxidoreductase subunit N from Shigella sonnei (strain Ss046).